Reading from the N-terminus, the 206-residue chain is Small ribosomal subunit protein uS4 (206 aa).

Residues 96–156 form the S4 RNA-binding domain; it reads GRLDNVVYRM…EKAKKQSRVK (61 aa).

It belongs to the universal ribosomal protein uS4 family. Part of the 30S ribosomal subunit. Contacts protein S5. The interaction surface between S4 and S5 is involved in control of translational fidelity.

Functionally, one of the primary rRNA binding proteins, it binds directly to 16S rRNA where it nucleates assembly of the body of the 30S subunit. Its function is as follows. With S5 and S12 plays an important role in translational accuracy. This chain is Small ribosomal subunit protein uS4, found in Shigella flexneri.